A 323-amino-acid chain; its full sequence is Transmembrane protein 171 (323 aa).

The next 4 helical transmembrane spans lie at 22-42, 57-77, 112-132, and 159-179; these read IFFL…ISIF, MVLK…VILA, LIFG…GIWV, and FLSL…FFVV. The span at 251–268 shows a compositional bias: polar residues; sequence YSSLFNLSRTPTPENQGA. The tract at residues 251 to 323 is disordered; that stretch reads YSSLFNLSRT…LGAPSESSPP (73 aa). Residues 281–290 show a composition bias toward low complexity; the sequence is SGPGSSSESS.

It is found in the membrane. The sequence is that of Transmembrane protein 171 (Tmem171) from Rattus norvegicus (Rat).